The chain runs to 511 residues: Maturase K (511 aa).

This sequence belongs to the intron maturase 2 family. MatK subfamily.

It is found in the plastid. Its subcellular location is the chloroplast. In terms of biological role, usually encoded in the trnK tRNA gene intron. Probably assists in splicing its own and other chloroplast group II introns. This Nardus stricta (Mat-grass) protein is Maturase K.